Here is a 352-residue protein sequence, read N- to C-terminus: Sporozoite surface protein P36 (352 aa).

Positions 1–29 are cleaved as a signal peptide; it reads MKQYEFARHINTYFSVAQNMLFSIFLYYA. 2 consecutive 6-Cys domains span residues 53–199 and 210–351; these read YMCI…IKKA and YIKG…STKE. A disulfide bridge connects residues Cys-57 and Cys-90. Residues Asn-89, Asn-97, Asn-111, Asn-156, and Asn-160 are each glycosylated (N-linked (GlcNAc...) asparagine). Intrachain disulfides connect Cys-104/Cys-179, Cys-122/Cys-177, Cys-214/Cys-238, Cys-252/Cys-333, and Cys-269/Cys-331. An N-linked (GlcNAc...) asparagine glycan is attached at Asn-254.

The protein localises to the cell membrane. It is found in the cell surface. Its function is as follows. Involved in sporozoite infection of hepatocytes and replication therein. The polypeptide is Sporozoite surface protein P36 (PBS36) (Plasmodium berghei (strain Anka)).